Here is a 367-residue protein sequence, read N- to C-terminus: Anthranilate phosphoribosyltransferase (367 aa).

5-phospho-alpha-D-ribose 1-diphosphate contacts are provided by residues glycine 105, glycine 108–aspartate 109, threonine 113, asparagine 115–threonine 118, lysine 133–serine 141, and glycine 145. Residue glycine 105 coordinates anthranilate. Serine 117 is a Mg(2+) binding site. Residue asparagine 136 coordinates anthranilate. Arginine 191 serves as a coordination point for anthranilate. Mg(2+)-binding residues include aspartate 249 and glutamate 250.

The protein belongs to the anthranilate phosphoribosyltransferase family. Homodimer. Mg(2+) is required as a cofactor.

It carries out the reaction N-(5-phospho-beta-D-ribosyl)anthranilate + diphosphate = 5-phospho-alpha-D-ribose 1-diphosphate + anthranilate. It participates in amino-acid biosynthesis; L-tryptophan biosynthesis; L-tryptophan from chorismate: step 2/5. Its function is as follows. Catalyzes the transfer of the phosphoribosyl group of 5-phosphorylribose-1-pyrophosphate (PRPP) to anthranilate to yield N-(5'-phosphoribosyl)-anthranilate (PRA). In Corynebacterium jeikeium (strain K411), this protein is Anthranilate phosphoribosyltransferase.